The chain runs to 267 residues: MTKTKIMGILNVTPDSFSDGGKFNNVESAINRVKAMIDEGVDIIDVGGVSTRPGHEMVSLEEEMNRVLPVVEAIVGFDVKISVDTFRSEVAEACLKLGVDMINDQWAGLYDHRMFQIVAKYDAEIILMHNGNGNRDEPVVEEMLTSLLAQAHQAKIAGIPSNKIWLDPGIGFAKTRNEEAEVMARLDELVATEYPVLLATSRKRFTKEMMGYDTTPVERDEVTAATTAYGIMKGVRAVRVHNVELNAKLAKGIDFLKENENARHNLS.

One can recognise a Pterin-binding domain in the interval 1 to 251 (MTKTKIMGIL…NVELNAKLAK (251 aa)). Mg(2+) is bound at residue Asn-11. (7,8-dihydropterin-6-yl)methyl diphosphate-binding positions include Thr-51, Asp-84, Asn-103, Asp-167, Lys-203, and 239–241 (RVH).

The protein belongs to the DHPS family. Homodimer. It depends on Mg(2+) as a cofactor.

The catalysed reaction is (7,8-dihydropterin-6-yl)methyl diphosphate + 4-aminobenzoate = 7,8-dihydropteroate + diphosphate. Its pathway is cofactor biosynthesis; tetrahydrofolate biosynthesis; 7,8-dihydrofolate from 2-amino-4-hydroxy-6-hydroxymethyl-7,8-dihydropteridine diphosphate and 4-aminobenzoate: step 1/2. Catalyzes the condensation of para-aminobenzoate (pABA) with 6-hydroxymethyl-7,8-dihydropterin diphosphate (DHPt-PP) to form 7,8-dihydropteroate (H2Pte), the immediate precursor of folate derivatives. This Staphylococcus aureus (strain MSSA476) protein is Dihydropteroate synthase (folP).